The primary structure comprises 691 residues: Elongation factor G (691 aa).

The tr-type G domain maps to 8–283; it reads EDYRNFGIMA…AVVDFLPNPT (276 aa). GTP is bound by residues 17–24, 81–85, and 135–138; these read AHIDAGKT, DTPGH, and NKMD.

It belongs to the TRAFAC class translation factor GTPase superfamily. Classic translation factor GTPase family. EF-G/EF-2 subfamily.

The protein localises to the cytoplasm. Functionally, catalyzes the GTP-dependent ribosomal translocation step during translation elongation. During this step, the ribosome changes from the pre-translocational (PRE) to the post-translocational (POST) state as the newly formed A-site-bound peptidyl-tRNA and P-site-bound deacylated tRNA move to the P and E sites, respectively. Catalyzes the coordinated movement of the two tRNA molecules, the mRNA and conformational changes in the ribosome. The chain is Elongation factor G from Maricaulis maris (strain MCS10) (Caulobacter maris).